We begin with the raw amino-acid sequence, 203 residues long: Abscisic acid receptor PYL5 (203 aa).

The span at 1 to 18 shows a compositional bias: polar residues; the sequence is MRSPVQLQHGSDATNGFH. Residues 1-29 form a disordered region; sequence MRSPVQLQHGSDATNGFHTLQPHDQTDGP. The segment at 51–201 is START-like; it reads HDVGPDQCCS…NLQSLARSTN (151 aa). Residues Lys87, 117 to 122, 144 to 150, and Glu166 each bind abscisate; these read AVSSTE and RLKNYRS. Positions 113-117 match the Gate loop motif; that stretch reads SGLPA. The short motif at 143–145 is the Latch loop element; sequence HRL.

This sequence belongs to the PYR/PYL/RCAR abscisic acid intracellular receptor family. Monomer. Homodimer. Binds ABA on one subunit only. Binds to CARs protein in an ABA-independent manner, both at the plasma membrane and in the nucleus. Binds both (-)-ABA and (+)-ABA. Interacts with HAB1, ABI1 and ABI2, and possibly with other PP2Cs.

It is found in the cytoplasm. The protein resides in the nucleus. It localises to the cell membrane. Receptor for abscisic acid (ABA) required for ABA-mediated responses such as stomatal closure and germination inhibition. Inhibits the activity of group-A protein phosphatases type 2C (PP2Cs) in an ABA-independent manner but more efficiently when activated by ABA. Confers enhanced sensitivity to ABA. Can be activated by both (-)-ABA and (+)-ABA. The sequence is that of Abscisic acid receptor PYL5 (PYL5) from Arabidopsis thaliana (Mouse-ear cress).